A 172-amino-acid chain; its full sequence is Co-chaperone protein HscB homolog (172 aa).

One can recognise a J domain in the interval 2–74; that stretch reads NYFELFGLVE…LRRAEYLLSL (73 aa).

This sequence belongs to the HscB family. As to quaternary structure, interacts with HscA and stimulates its ATPase activity.

Its function is as follows. Co-chaperone involved in the maturation of iron-sulfur cluster-containing proteins. Seems to help targeting proteins to be folded toward HscA. The chain is Co-chaperone protein HscB homolog from Aeromonas hydrophila subsp. hydrophila (strain ATCC 7966 / DSM 30187 / BCRC 13018 / CCUG 14551 / JCM 1027 / KCTC 2358 / NCIMB 9240 / NCTC 8049).